Here is a 196-residue protein sequence, read N- to C-terminus: uncharacterized protein (196 aa).

An HTH tetR-type domain is found at 7-67; that stretch reads RNTKEKILTA…AVIDNHVKIW (61 aa). The H-T-H motif DNA-binding region spans 30 to 49; it reads SINDILDETATGKGQFYYYF.

This is an uncharacterized protein from Lactococcus lactis subsp. lactis (Streptococcus lactis).